Reading from the N-terminus, the 437-residue chain is NADH-ubiquinone oxidoreductase chain 4 (437 aa).

13 helical membrane passes run 8-28, 50-70, 78-98, 100-120, 132-152, 177-197, 212-232, 239-259, 266-286, 297-317, 324-344, 361-381, and 417-437; these read GASI…AFII, LTPI…LVLI, YKYI…FCVC, FLTF…LILL, FYLM…LLYL, LVGL…HLWL, LAGV…NFII, VISV…IICI, ALVA…ILMM, TMIA…LSYL, LMFM…WFLF, LLII…MCII, and HVLT…LFSV.

This sequence belongs to the complex I subunit 4 family.

The protein resides in the mitochondrion membrane. It carries out the reaction a ubiquinone + NADH + 5 H(+)(in) = a ubiquinol + NAD(+) + 4 H(+)(out). Core subunit of the mitochondrial membrane respiratory chain NADH dehydrogenase (Complex I) that is believed to belong to the minimal assembly required for catalysis. Complex I functions in the transfer of electrons from NADH to the respiratory chain. The immediate electron acceptor for the enzyme is believed to be ubiquinone. This chain is NADH-ubiquinone oxidoreductase chain 4 (ND4), found in Albinaria caerulea (Land snail).